We begin with the raw amino-acid sequence, 182 residues long: Adenylate kinase (182 aa).

12 to 17 (GAGKGT) is an ATP binding site. The tract at residues 32–61 (STGELLRKEIDLDTYLGKQVKDIMNKGELV) is NMP. AMP is bound by residues Thr33, Arg38, 59–61 (ELV), 85–88 (GYPR), and Gln92. Positions 126–132 (LRGRKDD) are LID. Arg127 contacts ATP. Residues Arg129 and Arg140 each coordinate AMP. Gly168 contributes to the ATP binding site.

The protein belongs to the adenylate kinase family. Monomer.

The protein resides in the cytoplasm. It carries out the reaction AMP + ATP = 2 ADP. The protein operates within purine metabolism; AMP biosynthesis via salvage pathway; AMP from ADP: step 1/1. Its function is as follows. Catalyzes the reversible transfer of the terminal phosphate group between ATP and AMP. Plays an important role in cellular energy homeostasis and in adenine nucleotide metabolism. The chain is Adenylate kinase from Prochlorococcus marinus (strain MIT 9515).